The sequence spans 156 residues: 6,7-dimethyl-8-ribityllumazine synthase (156 aa).

5-amino-6-(D-ribitylamino)uracil is bound by residues Phe22, 56 to 58, and 80 to 82; these read AFE and AVV. Residue 85–86 participates in (2S)-2-hydroxy-3-oxobutyl phosphate binding; it reads ET. The Proton donor role is filled by His88. Phe113 is a binding site for 5-amino-6-(D-ribitylamino)uracil. Position 127 (Arg127) interacts with (2S)-2-hydroxy-3-oxobutyl phosphate.

This sequence belongs to the DMRL synthase family.

The enzyme catalyses (2S)-2-hydroxy-3-oxobutyl phosphate + 5-amino-6-(D-ribitylamino)uracil = 6,7-dimethyl-8-(1-D-ribityl)lumazine + phosphate + 2 H2O + H(+). It participates in cofactor biosynthesis; riboflavin biosynthesis; riboflavin from 2-hydroxy-3-oxobutyl phosphate and 5-amino-6-(D-ribitylamino)uracil: step 1/2. Catalyzes the formation of 6,7-dimethyl-8-ribityllumazine by condensation of 5-amino-6-(D-ribitylamino)uracil with 3,4-dihydroxy-2-butanone 4-phosphate. This is the penultimate step in the biosynthesis of riboflavin. The chain is 6,7-dimethyl-8-ribityllumazine synthase from Pediococcus pentosaceus (strain ATCC 25745 / CCUG 21536 / LMG 10740 / 183-1w).